The primary structure comprises 102 residues: Small ribosomal subunit protein uS10 (102 aa).

The protein belongs to the universal ribosomal protein uS10 family. In terms of assembly, part of the 30S ribosomal subunit.

Involved in the binding of tRNA to the ribosomes. This Bacillus thuringiensis (strain Al Hakam) protein is Small ribosomal subunit protein uS10.